A 61-amino-acid chain; its full sequence is Large ribosomal subunit protein uL30 (61 aa).

This sequence belongs to the universal ribosomal protein uL30 family. Part of the 50S ribosomal subunit.

This chain is Large ribosomal subunit protein uL30, found in Chlorobaculum tepidum (strain ATCC 49652 / DSM 12025 / NBRC 103806 / TLS) (Chlorobium tepidum).